Consider the following 202-residue polypeptide: Casparian strip membrane protein 1 (202 aa).

Residues methionine 1–glutamate 13 show a composition bias toward polar residues. The interval methionine 1–histidine 30 is disordered. The Cytoplasmic portion of the chain corresponds to methionine 1 to alanine 42. A helical transmembrane segment spans residues isoleucine 43 to methionine 63. At glycine 64 to threonine 90 the chain is on the extracellular side. The chain crosses the membrane as a helical span at residues phenylalanine 91–isoleucine 111. Residues valine 112–aspartate 130 are Cytoplasmic-facing. A helical membrane pass occupies residues threonine 131–alanine 151. Over histidine 152–alanine 177 the chain is Extracellular. Residues valine 178 to valine 198 traverse the membrane as a helical segment. Residues leucine 199–histidine 202 lie on the Cytoplasmic side of the membrane.

The protein belongs to the Casparian strip membrane proteins (CASP) family. Homodimer and heterodimers.

The protein localises to the cell membrane. Regulates membrane-cell wall junctions and localized cell wall deposition. Required for establishment of the Casparian strip membrane domain (CSD) and the subsequent formation of Casparian strips, a cell wall modification of the root endodermis that determines an apoplastic barrier between the intraorganismal apoplasm and the extraorganismal apoplasm and prevents lateral diffusion. The sequence is that of Casparian strip membrane protein 1 from Triphysaria pusilla (Dwarf owl's-clover).